The following is a 2555-amino-acid chain: Squalestatin hexaketide synthase clz14 (2555 aa).

Positions 1–84 (MDVSKEAGHH…PNATSTTTTT (84 aa)) are disordered. A compositionally biased stretch (low complexity) spans 10-84 (HANGFANGNT…PNATSTTTTT (75 aa)). The 421-residue stretch at 91–511 (QVPVAICGIG…GSNTHIIIDS (421 aa)) folds into the Ketosynthase family 3 (KS3) domain. Active-site for beta-ketoacyl synthase activity residues include cysteine 261, histidine 398, and histidine 435. Residues 611–928 (FIFTGQGAQW…LEGIGKLFCF (318 aa)) form a malonyl-CoA:ACP transacylase (MAT) domain region. The N-terminal hotdog fold stretch occupies residues 975–1104 (HELLGERSLE…GLVTASVVTS (130 aa)). The interval 975 to 1256 (HELLGERSLE…RGFKCKKTDD (282 aa)) is dehydratase (DH) domain. One can recognise a PKS/mFAS DH domain in the interval 975 to 1260 (HELLGERSLE…CKKTDDAFIQ (286 aa)). Histidine 1007 functions as the Proton acceptor; for dehydratase activity in the catalytic mechanism. The tract at residues 1117-1260 (SRKVDTSRWY…CKKTDDAFIQ (144 aa)) is C-terminal hotdog fold. Aspartate 1177 (proton donor; for dehydratase activity) is an active-site residue. Residues 1424–1595 (SFFQAAGLNK…GFEGAGTVVL (172 aa)) are methyltransferase (CMet) domain. The enoyl reductase (ER) (ER) domain stretch occupies residues 1821–2141 (GMLNTLHWVG…RGVHMGRIVV (321 aa)). Residues 2165 to 2338 (STYLLTGGMG…PASVIDIAAI (174 aa)) form a ketoreductase (KR) domain region. Residues 2468–2546 (IIFAQEIAKR…SLGRLATKRL (79 aa)) form the Carrier domain. The residue at position 2505 (serine 2505) is an O-(pantetheine 4'-phosphoryl)serine.

It functions in the pathway secondary metabolite biosynthesis. Its function is as follows. Highly reducing polyketide synthase (HR-PKS); part of the gene cluster that mediates the biosynthesis of squalestatin S1 (SQS1, also known as zaragozic acid A), a heavily oxidized fungal polyketide that offers potent cholesterol lowering activity by targeting squalene synthase (SS). SQS1 is composed of a 2,8-dioxobicyclic[3.2.1]octane-3,4,5-tricarboxyclic acid core that is connected to two lipophilic polyketide arms. These initial steps feature the priming of an unusual benzoic acid starter unit onto the highly reducing polyketide synthase clz14, followed by oxaloacetate extension and product release to generate a tricarboxylic acid containing product. The phenylalanine ammonia lyase (PAL) clz10 and the acyl-CoA ligase clz12 are involved in transforming phenylalanine into benzoyl-CoA. The citrate synthase-like protein clz17 is involved in connecting the C-alpha-carbons of the hexaketide chain and oxaloacetate to afford the tricarboxylic acid unit. The potential hydrolytic enzymes, clz11 and clz13, are in close proximity to pks2 and may participate in product release. On the other side, the tetraketide arm is synthesized by a the squalestatin tetraketide synthase clz2 and enzymatically esterified to the core in the last biosynthetic step, by the acetyltransferase clz6. The biosynthesis of the tetraketide must involve 3 rounds of chain extension. After the first and second rounds methyl-transfer occurs, and in all rounds of extension the ketoreductase and dehydratase are active. The enoyl reductase and C-MeT of clz2 are not active in the final round of extension. The acetyltransferase clz6 appears to have a broad substrate selectivity for its acyl CoA substrate, allowing the in vitro synthesis of novel squalestatins. The biosynthesis of SQS1 requires several oxidative steps likely performed by oxidoreductases clz3, clz15 and clz16. Finally, in support of the identification of the cluster as being responsible for SQS1 production, the cluster contains a gene encoding a putative squalene synthase (SS) clz20, suggesting a likely mechanism for self-resistance. The polypeptide is Squalestatin hexaketide synthase clz14 (Cochliobolus lunatus (Filamentous fungus)).